Reading from the N-terminus, the 199-residue chain is Protein-methionine-sulfoxide reductase heme-binding subunit MsrQ (199 aa).

A run of 4 helical transmembrane segments spans residues 8–28 (IIWL…WLFW), 82–102 (LWCF…ELGI), 116–136 (PYLT…LTST), and 153–173 (VVYL…KVLS).

Belongs to the MsrQ family. As to quaternary structure, heterodimer of a catalytic subunit (MsrP) and a heme-binding subunit (MsrQ). Requires FMN as cofactor. Heme b is required as a cofactor.

It localises to the cell inner membrane. Part of the MsrPQ system that repairs oxidized periplasmic proteins containing methionine sulfoxide residues (Met-O), using respiratory chain electrons. Thus protects these proteins from oxidative-stress damage caused by reactive species of oxygen and chlorine generated by the host defense mechanisms. MsrPQ is essential for the maintenance of envelope integrity under bleach stress, rescuing a wide series of structurally unrelated periplasmic proteins from methionine oxidation, including the primary periplasmic chaperone SurA and the lipoprotein Pal. MsrQ provides electrons for reduction to the reductase catalytic subunit MsrP, using the quinone pool of the respiratory chain. The protein is Protein-methionine-sulfoxide reductase heme-binding subunit MsrQ of Salmonella arizonae (strain ATCC BAA-731 / CDC346-86 / RSK2980).